The sequence spans 586 residues: MSPSPSSSGKDGGGENAEEAQPQPQPQPQPQPQSQPPSSNKRPSNSTPPPTQLSKIKYSGGPQIVKKERRQSSSRFNLSKNRELQKLPALKDSPTQEREELFIQKLRQCCVLFDFVSDPLSDLKFKEVKRAGLNEMVEYITHSRDVVTEAIYPEAVTMFSVNLFRTLPPSSNPTGAEFDPEEDEPTLEAAWPHLQLVYEFFLRFLESPDFQPNIAKKYIDQKFVLALLDLFDSEDPRERDFLKTILHRIYGKFLGLRAYIRRQINHIFYRFIYETEHHNGIAELLEILGSIINGFALPLKEEHKMFLIRVLLPLHKVKSLSVYHPQLAYCVVQFLEKESSLTEPVIVGLLKFWPKTHSPKEVMFLNELEEILDVIEPSEFSKVMEPLFRQLAKCVSSPHFQVAERALYYWNNEYIMSLISDNAARVLPIMFPALYRNSKSHWNKTIHGLIYNALKLFMEMNQKLFDDCTQQYKAEKQKGRFRMKEREEMWQKIEELARLNPQYPMFRAPPPLPPVYSMETETPTAEDIQLLKRTVETEAVQMLKDIKKEKVLLRRKSELPQDVYTIKALEAHKRAEEFLTASQEAL.

The disordered stretch occupies residues 1-80; it reads MSPSPSSSGK…QSSSRFNLSK (80 aa). 6 consecutive repeat copies span residues 21–22, 23–24, 25–26, 27–28, 29–30, and 31–32. Residues 21 to 36 form an 8 X 2 AA approximate tandem repeats of Q-P region; it reads QPQPQPQPQPQPQSQP. Pro residues predominate over residues 23 to 35; the sequence is QPQPQPQPQPQSQ. A 7; approximate repeat occupies 33 to 34; sequence QS. Repeat unit 8 spans residues 35–36; the sequence is QP. Positions 36–45 are enriched in low complexity; the sequence is PPSSNKRPSN. Threonine 47 bears the Phosphothreonine mark. Serine 72, serine 73, and serine 74 each carry phosphoserine. The short motif at 507 to 514 is the SH3-binding; class I element; sequence RAPPPLPP. A Nuclear localization signal motif is present at residues 532 to 549; that stretch reads KRTVETEAVQMLKDIKKE. Phosphoserine is present on residues serine 557 and serine 582.

This sequence belongs to the phosphatase 2A regulatory subunit B56 family. PP2A consists of a common heterodimeric core enzyme, composed of a 36 kDa catalytic subunit (subunit C) and a 65 kDa constant regulatory subunit (PR65 or subunit A), that associates with a variety of regulatory subunits. Proteins that associate with the core dimer include three families of regulatory subunits B (the R2/B/PR55/B55, R3/B''/PR72/PR130/PR59 and R5/B'/B56 families), the 48 kDa variable regulatory subunit, viral proteins, and cell signaling molecules. Interacts with the PP2A A subunit PPP2R1A. Interacts with SGO1. Interacts with ADCY8. Highly expressed in brain.

The protein resides in the nucleus. In terms of biological role, the B regulatory subunit might modulate substrate selectivity and catalytic activity, and might also direct the localization of the catalytic enzyme to a particular subcellular compartment. This is Serine/threonine-protein phosphatase 2A 56 kDa regulatory subunit delta isoform (PPP2R5D) from Oryctolagus cuniculus (Rabbit).